The chain runs to 146 residues: Snaclec 1 (146 aa).

Positions 1 to 23 (MGRFIFMSFGLLVVFLSLSGTGA) are cleaved as a signal peptide. 3 disulfide bridges follow: Cys-25-Cys-36, Cys-53-Cys-142, and Cys-119-Cys-134. The C-type lectin domain maps to 32–143 (YEGHCYRVFQ…CSRTYSFVCK (112 aa)).

It belongs to the snaclec family. Heterodimer; disulfide-linked. In terms of tissue distribution, expressed by the venom gland.

It localises to the secreted. Functionally, interferes with one step of hemostasis (modulation of platelet aggregation, or coagulation cascade, for example). In Sistrurus catenatus edwardsii (Desert massasauga), this protein is Snaclec 1.